We begin with the raw amino-acid sequence, 294 residues long: Small ribosomal subunit biogenesis GTPase RsgA 2, mitochondrial (294 aa).

The transit peptide at 1–68 (MQTFSSAAAL…RSFLAPVLPL (68 aa)) directs the protein to the mitochondrion. Residues 155 to 294 (VSEVLDPPVA…VSFFLSYFIL (140 aa)) enclose the CP-type G domain. Position 255 to 263 (255 to 263 (GPSGVGKSS)) interacts with GTP.

It belongs to the TRAFAC class YlqF/YawG GTPase family.

It localises to the mitochondrion. This Arabidopsis thaliana (Mouse-ear cress) protein is Small ribosomal subunit biogenesis GTPase RsgA 2, mitochondrial.